A 329-amino-acid polypeptide reads, in one-letter code: Mitochondrial substrate carrier family protein W (329 aa).

Residues 1–39 (MTTNNSNDNNKRYGIIKQQLQQQQQQHHQQHEQHSRLVE) are Mitochondrial intermembrane-facing. 3 Solcar repeats span residues 34–119 (HSRL…CKEL), 133–221 (ESPL…FKSI), and 231–321 (LGIV…IKKF). The helical transmembrane segment at 40-60 (MTAGCGAGFMASLFTTPLDVI) threads the bilayer. Topologically, residues 61-90 (KTTLQVDNSSNKTIMSTVKSILDRKGGVKN) are mitochondrial matrix. Residues 91–111 (LYLGLKPTLVGQIPSWAVYFS) form a helical membrane-spanning segment. Topologically, residues 112-135 (TYTFCKELFTKENDKHSLLEKESP) are mitochondrial intermembrane. A helical membrane pass occupies residues 136-156 (LIFMTSAIIAGAATSICTSPI). Residues 157-193 (WLIKTRFITQEMVGRQKKYRGIVHSMVSIYHEEGFRG) lie on the Mitochondrial matrix side of the membrane. The chain crosses the membrane as a helical span at residues 194-214 (LYKGLGPSLLGVLHVGVQFPL). Residues 215-230 (YEKFKSILKEKNKNKE) lie on the Mitochondrial intermembrane side of the membrane. The helical transmembrane segment at 231–251 (LGIVEIMIASSVSKIIASVVA) threads the bilayer. At 252-296 (YPHEVLRARSQDSSPDSPNRTYRGNIIQMFKQIVREEGWRGLYRG) the chain is on the mitochondrial matrix side. Residues 297–315 (MGVNLLRVTPSCVITFTSY) form a helical membrane-spanning segment. Residues 316 to 329 (EYIKKFLSQNQNHF) lie on the Mitochondrial intermembrane side of the membrane.

It belongs to the mitochondrial carrier (TC 2.A.29) family.

It localises to the mitochondrion inner membrane. Mitochondrial solute carriers shuttle metabolites, nucleotides, and cofactors through the mitochondrial inner membrane. The sequence is that of Mitochondrial substrate carrier family protein W (mcfW) from Dictyostelium discoideum (Social amoeba).